A 232-amino-acid polypeptide reads, in one-letter code: MNKKIQLQDLGNRDYKSTWEYQEELFQDIVDLKIKNRREELDLPTSNYLLFVEHPHVYTLGKSGDLENLLLNEKQLEAKGAAFYKINRGGDITYHGPGQIVGYPILDLENFFTDIHKYLRLLEESMILTLAEYGLESGRSEGETGVWLGVGTPFARKICAMGVRASRWVTMHGFALNVNVDLGYFDNIIPCGIRGKGVTSLNVELGVEKVDEDEVKSKIIKHLTHLFEAEIV.

The region spanning 43–231 (LPTSNYLLFV…HLTHLFEAEI (189 aa)) is the BPL/LPL catalytic domain. Substrate-binding positions include 88 to 95 (RGGDITYH), 160 to 162 (AMG), and 173 to 175 (GFA). Residue Cys191 is the Acyl-thioester intermediate of the active site.

Belongs to the LipB family.

The protein localises to the cytoplasm. The enzyme catalyses octanoyl-[ACP] + L-lysyl-[protein] = N(6)-octanoyl-L-lysyl-[protein] + holo-[ACP] + H(+). It participates in protein modification; protein lipoylation via endogenous pathway; protein N(6)-(lipoyl)lysine from octanoyl-[acyl-carrier-protein]: step 1/2. In terms of biological role, catalyzes the transfer of endogenously produced octanoic acid from octanoyl-acyl-carrier-protein onto the lipoyl domains of lipoate-dependent enzymes. Lipoyl-ACP can also act as a substrate although octanoyl-ACP is likely to be the physiological substrate. This Flavobacterium johnsoniae (strain ATCC 17061 / DSM 2064 / JCM 8514 / BCRC 14874 / CCUG 350202 / NBRC 14942 / NCIMB 11054 / UW101) (Cytophaga johnsonae) protein is Octanoyltransferase.